Consider the following 791-residue polypeptide: Putative DNA (cytosine-5)-methyltransferase CMT1 (791 aa).

Residues 37-59 are disordered; the sequence is YQSKKTKLQAPTKKPANKGGKKE. One can recognise a BAH domain in the interval 79 to 199; it reads VLINLNDDVY…VPYLNFTSAD (121 aa). The 544-residue stretch at 225–768 folds into the SAM-dependent MTase C5-type domain; sequence KFLLDLYSGC…YAFGMASQGL (544 aa). A coiled-coil region spans residues 308–333; the sequence is VESISELEDEEVEENDDIDEASTGAE. In terms of domain architecture, Chromo spans 339 to 404; it reads FEVEKFLGIM…DGFKSHLLPL (66 aa). The active site involves C417.

It belongs to the class I-like SAM-binding methyltransferase superfamily. C5-methyltransferase family. In terms of tissue distribution, expressed in flowers. Not detected in leaves, roots, seedlings and plants prior formation of flower buds.

It is found in the nucleus. It catalyses the reaction a 2'-deoxycytidine in DNA + S-adenosyl-L-methionine = a 5-methyl-2'-deoxycytidine in DNA + S-adenosyl-L-homocysteine + H(+). Its function is as follows. May be involved in the CpXpG methylation and in gene silencing. The sequence is that of Putative DNA (cytosine-5)-methyltransferase CMT1 (CMT1) from Arabidopsis thaliana (Mouse-ear cress).